Here is a 971-residue protein sequence, read N- to C-terminus: Exportin-2 (971 aa).

The region spanning 29 to 102 (AEKFLESVEG…KANIVNLMLS (74 aa)) is the Importin N-terminal domain.

It belongs to the XPO2/CSE1 family. In terms of assembly, interacts with cftr.

Its subcellular location is the cytoplasm. It is found in the nucleus. In terms of biological role, export receptor for importin alpha. Mediates importin-alpha re-export from the nucleus to the cytoplasm after import substrates have been released into the nucleoplasm. Negatively regulates fluid secretion and plays a role in fluid homeostasis by down-regulating cftr activity. This chain is Exportin-2 (cse1l), found in Pagrus major (Red sea bream).